Consider the following 1320-residue polypeptide: MSETIDNPTVEEYNEKETVVSGEQVEQVEQVEQENEQVSQSFQISIKTPAEIGTINIQVQPTDTLIDIQSFLYETSETCLYSSFEFRLYGKQIPEYSELSSIEGLVEGATLEMVPVDYNERSAKLHVKRLRDIMNTGLTEFANMNNPSLFTSFSFPEKSNILTEEQQLEEQKQKFEQQQQQQQQTEDKEEKETIATEQQQNKKNKHHNKKGNKKNNGDESLNNENNEEKLTPQQKERKQKMTEIKGIDKPMLSSYYPESPIAPVQCVKSMIYSGWSPVPGYRKLFGDLFYLDITLLEGTTICVTASTQGFFINQSSNATFNPSVSPKATINHSLHQLLTQVSRLFRRGLNQILTNIGRNHPFDMLPGVLPVHNWVASSKTNRYDINKGTDTFVSVQDVELRGNPRDWNEEIQAPKELPKSTVQERIIRDRAISKVNSEFVECAIRGAQVIVDKAILPINPAENQRSHMFLYNNIFFSYALDTRDSFTDCGGDDAARTSANNDLKGIRLYNLADIDGLYTLGTAIVDYKGQRIIAQSLIPGILTTEKTSKIYYGSMDTPTNEEEEQQQKEENEENKNNNTKSIKADPEFHSRLLQAASLLHLSESKVISEDTNQEVSVCTSFESKGIIGIDGRRYILDLIKATPRDPNYTETKDQLSVLRPEAIATYSEYFKVTWLNQKRQQKLKEKEERQKKEGIDPPTATARDEDVQLTEEDLAQSPVVSFNPNLFSKVKLGGTPEEQQKDIEDLKAIGAFLKGILIPRLIEDLMLFNVAPVDGQTLTQVMHVRGINMRYLGYIAKNESANVPFIQDLLFNEMVSRAAKHCFNRLLRSTNASDMAHSISHFLNCFLGTETGSVSADEKSKKAKQIKSSAINELTQGKLWSEIAQLVSSKFDFEIPTHSVPMESRLIVLRCICLKMGIQILAKDYNFTTDAPFSPEDIVDLFPIVKHVNPRSTDGLDLLEAGKTFFNQRKYELATELLGEALAIYHQVHGPIHPDAGACFTHLAMLAYQNEQYDLAIEYQKNALVITEKTAGLDHHETVQAYTTLAVFCQRSGRYNESIGYMKHVLYLTDLLGGEYNPERASIYTAIAAILEDTERFDLALEFLKQTLKHQEFLFTPDHLMCSTTYHKMAIVCARATNFDDSIIHQKKSTDILEKELGEAHPRTKESLEFYTGLSQTANQIKLFKQHQALKAEQDELARLQKEKADQFKKSQPRVSAMPPSLENGSVSELLNYINGKPKKSQSKKSKSTNTTTTTNTTTATTSKSKITMAKTPNPTTKATTSKSSATASSAATNKSTTKTNPTSSSAADSSKPNKKSSKN.

3 disordered regions span residues 166–241 (QQLE…KQKM), 552–582 (YGSM…TKSI), and 683–708 (LKEK…EDVQ). The segment covering 185–194 (TEDKEEKETI) has biased composition (basic and acidic residues). Positions 202 to 213 (KKNKHHNKKGNK) are enriched in basic residues. 3 stretches are compositionally biased toward basic and acidic residues: residues 226-241 (NEEK…KQKM), 565-575 (QQQKEENEENK), and 683-695 (LKEK…KEGI). A Clu domain is found at 379 to 649 (KTNRYDINKG…KATPRDPNYT (271 aa)). TPR repeat units lie at residues 955-988 (GLDL…YHQV), 997-1030 (GACF…TEKT), 1039-1072 (VQAY…TDLL), 1081-1114 (ASIY…QEFL), and 1123-1156 (STTY…LEKE). Positions 1204–1320 (KADQFKKSQP…SKPNKKSSKN (117 aa)) are disordered. A compositionally biased stretch (basic residues) spans 1237–1247 (KPKKSQSKKSK). A compositionally biased stretch (low complexity) spans 1248–1311 (STNTTTTTNT…PTSSSAADSS (64 aa)).

It belongs to the CLU family.

The protein localises to the cytoplasm. Its function is as follows. mRNA-binding protein involved in proper cytoplasmic distribution of mitochondria. The sequence is that of Clustered mitochondria protein homolog from Dictyostelium discoideum (Social amoeba).